Here is a 993-residue protein sequence, read N- to C-terminus: Testis-expressed protein 13C (993 aa).

Disordered stretches follow at residues 281-381 (QEET…SLKK), 520-547 (DSKS…SHSL), and 894-959 (FSKS…PVNW). Residues 325–335 (GMTSQGDSSSH) show a composition bias toward polar residues. Residues 353-364 (SRSHSLEKKPVM) show a composition bias toward basic and acidic residues. The span at 944-957 (ESQQQKPASCSSPV) shows a compositional bias: polar residues. Residues 955–984 (SPVNWACPWCNAMNFPRNKVCSKCKRVRMP) form a RanBP2-type zinc finger.

It belongs to the TEX13 family.

The chain is Testis-expressed protein 13C from Homo sapiens (Human).